A 122-amino-acid chain; its full sequence is MKILTRIPRRLLPWLLGGALALVAVSFAPALLSHETVVQIRVANSGTPLPDGFYLYQQLSAQGVRIKSITPSGDALVIHFENEEQSLAAQKVLRRLLPQGFVVAAGHQASQQNQDANRSIYS.

Over 1 to 10 the chain is Cytoplasmic; that stretch reads MKILTRIPRR. Residues 11–31 traverse the membrane as a helical segment; sequence LLPWLLGGALALVAVSFAPAL. Residues 32–122 are Periplasmic-facing; the sequence is LSHETVVQIR…NQDANRSIYS (91 aa).

Belongs to the MzrA family. In terms of assembly, interacts with EnvZ.

It localises to the cell inner membrane. Its function is as follows. Modulates the activity of the EnvZ/OmpR two-component regulatory system, probably by directly modulating EnvZ enzymatic activity and increasing stability of phosphorylated OmpR. In Pantoea sp. (strain At-9b), this protein is Modulator protein MzrA.